Here is a 554-residue protein sequence, read N- to C-terminus: Glutamine--tRNA ligase (554 aa).

The 'HIGH' region signature appears at 34–44 (PEPNGYLHIGH). Residues 35–37 (EPN) and 41–47 (HIGHAKS) each bind ATP. Aspartate 67 and tyrosine 212 together coordinate L-glutamine. ATP-binding positions include threonine 231, 261 to 262 (RL), and 269 to 271 (MSK). The 'KMSKS' region motif lies at 268-272 (VMSKR). The interaction with tRNA stretch occupies residues 317 to 324 (TKQDNTIE).

It belongs to the class-I aminoacyl-tRNA synthetase family. Monomer.

Its subcellular location is the cytoplasm. It carries out the reaction tRNA(Gln) + L-glutamine + ATP = L-glutaminyl-tRNA(Gln) + AMP + diphosphate. The sequence is that of Glutamine--tRNA ligase from Escherichia coli O17:K52:H18 (strain UMN026 / ExPEC).